We begin with the raw amino-acid sequence, 430 residues long: Enolase (430 aa).

Position 167 (Gln-167) interacts with (2R)-2-phosphoglycerate. Glu-209 acts as the Proton donor in catalysis. Mg(2+)-binding residues include Asp-245, Glu-286, and Asp-313. Positions 338, 367, 368, and 389 each coordinate (2R)-2-phosphoglycerate. The Proton acceptor role is filled by Lys-338.

Belongs to the enolase family. It depends on Mg(2+) as a cofactor.

The protein resides in the cytoplasm. Its subcellular location is the secreted. It is found in the cell surface. The enzyme catalyses (2R)-2-phosphoglycerate = phosphoenolpyruvate + H2O. Its pathway is carbohydrate degradation; glycolysis; pyruvate from D-glyceraldehyde 3-phosphate: step 4/5. Its function is as follows. Catalyzes the reversible conversion of 2-phosphoglycerate (2-PG) into phosphoenolpyruvate (PEP). It is essential for the degradation of carbohydrates via glycolysis. In Synechococcus sp. (strain WH7803), this protein is Enolase.